Here is a 633-residue protein sequence, read N- to C-terminus: Molybdenum cofactor biosynthesis protein 1 (633 aa).

Residues 1-380 (MAAQPVSRVV…QMKNRPMILI (380 aa)) form a molybdenum cofactor biosynthesis protein A region. The residue at position 61 (Ser-61) is a Phosphoserine. The Radical SAM core domain maps to 61–295 (SFGRHHSYLR…AKAFKIPGFR (235 aa)). Arg-70 is a binding site for GTP. Positions 77 and 81 each coordinate [4Fe-4S] cluster. Tyr-83 contributes to the S-adenosyl-L-methionine binding site. Cys-84 is a [4Fe-4S] cluster binding site. Arg-120 contacts GTP. Gly-124 serves as a coordination point for S-adenosyl-L-methionine. Thr-151 serves as a coordination point for GTP. Ser-175 lines the S-adenosyl-L-methionine pocket. Position 195 is an N6-acetyllysine (Lys-195). Residue Lys-212 coordinates GTP. S-adenosyl-L-methionine is bound at residue Met-246. Residues Cys-309 and Cys-312 each contribute to the [4Fe-4S] cluster site. 314–316 (RLR) provides a ligand contact to GTP. Residue Cys-326 participates in [4Fe-4S] cluster binding. The segment at 410-633 (VSFSSQMVTL…GGQRGDFHRT (224 aa)) is molybdenum cofactor biosynthesis protein C. The segment at 446-480 (SSHLDSDANPKCLSPTEPQAPAASSGPLPDSDQLT) is disordered. N6-acetyllysine is present on Lys-525. The active-site For molybdenum cofactor biosynthesis protein C activity is Asp-603.

This sequence in the C-terminal section; belongs to the MoaC family. The protein in the N-terminal section; belongs to the radical SAM superfamily. MoaA family. As to quaternary structure, isoform MOCS1A and isoform MOCS1B probably form a heterooligomer. Requires [4Fe-4S] cluster as cofactor.

The enzyme catalyses GTP + AH2 + S-adenosyl-L-methionine = (8S)-3',8-cyclo-7,8-dihydroguanosine 5'-triphosphate + 5'-deoxyadenosine + L-methionine + A + H(+). It carries out the reaction (8S)-3',8-cyclo-7,8-dihydroguanosine 5'-triphosphate = cyclic pyranopterin phosphate + diphosphate. It functions in the pathway cofactor biosynthesis; molybdopterin biosynthesis. In terms of biological role, isoform MOCS1A and isoform MOCS1B probably form a complex that catalyzes the conversion of 5'-GTP to cyclic pyranopterin monophosphate (cPMP). MOCS1A catalyzes the cyclization of GTP to (8S)-3',8-cyclo-7,8-dihydroguanosine 5'-triphosphate and MOCS1B catalyzes the subsequent conversion of (8S)-3',8-cyclo-7,8-dihydroguanosine 5'-triphosphate to cPMP. The sequence is that of Molybdenum cofactor biosynthesis protein 1 (MOCS1) from Bos taurus (Bovine).